The primary structure comprises 193 residues: Ion-translocating oxidoreductase complex subunit A (193 aa).

The next 6 membrane-spanning stretches (helical) occupy residues Leu5 to Leu25, Met39 to Ile59, Ile63 to Val83, Leu102 to Leu122, Ala134 to Ile154, and Ala171 to Val191.

Belongs to the NqrDE/RnfAE family. As to quaternary structure, the complex is composed of six subunits: RsxA, RsxB, RsxC, RsxD, RsxE and RsxG.

The protein localises to the cell inner membrane. Functionally, part of a membrane-bound complex that couples electron transfer with translocation of ions across the membrane. Required to maintain the reduced state of SoxR. This Escherichia fergusonii (strain ATCC 35469 / DSM 13698 / CCUG 18766 / IAM 14443 / JCM 21226 / LMG 7866 / NBRC 102419 / NCTC 12128 / CDC 0568-73) protein is Ion-translocating oxidoreductase complex subunit A.